Consider the following 249-residue polypeptide: Nodulation protein H (249 aa).

Functionally, required for the formation of sulfated nod factor. Proposed to transfer activated sulfate (PAPS) to a N-acetylglucosamine of the nod factor. The chain is Nodulation protein H (nodH) from Rhizobium tropici.